Here is a 118-residue protein sequence, read N- to C-terminus: Fluoride-specific ion channel FluC 1 (118 aa).

4 consecutive transmembrane segments (helical) span residues 5–25 (FVLV…ISVL), 34–54 (FPFA…FLVS), 56–76 (ALGP…YTTF), and 98–118 (YLGC…MLGV). Residues Gly71 and Thr74 each contribute to the Na(+) site.

It belongs to the fluoride channel Fluc/FEX (TC 1.A.43) family.

It localises to the cell membrane. It carries out the reaction fluoride(in) = fluoride(out). Na(+) is not transported, but it plays an essential structural role and its presence is essential for fluoride channel function. Its function is as follows. Fluoride-specific ion channel. Important for reducing fluoride concentration in the cell, thus reducing its toxicity. In Listeria monocytogenes serotype 4b (strain F2365), this protein is Fluoride-specific ion channel FluC 1.